We begin with the raw amino-acid sequence, 102 residues long: RNA-binding protein Hfq (102 aa).

Positions 9–68 (DPFLNALRRERVPVSIYLVNGIKLQGQIESFDQFVILLKNTVSQMVYKHAISTVVPSRPV) constitute a Sm domain. Residues 63–102 (VPSRPVSHHSNNAGGGTSSNYHHGSSAQGTSAQQDSEETE) are disordered. Over residues 70–96 (HHSNNAGGGTSSNYHHGSSAQGTSAQQ) the composition is skewed to polar residues.

It belongs to the Hfq family. Homohexamer.

Its function is as follows. RNA chaperone that binds small regulatory RNA (sRNAs) and mRNAs to facilitate mRNA translational regulation in response to envelope stress, environmental stress and changes in metabolite concentrations. Also binds with high specificity to tRNAs. The polypeptide is RNA-binding protein Hfq (Citrobacter koseri (strain ATCC BAA-895 / CDC 4225-83 / SGSC4696)).